The sequence spans 100 residues: Large ribosomal subunit protein bL28 (100 aa).

The protein belongs to the bacterial ribosomal protein bL28 family.

This chain is Large ribosomal subunit protein bL28, found in Ehrlichia ruminantium (strain Welgevonden).